Here is a 676-residue protein sequence, read N- to C-terminus: UvrABC system protein B (676 aa).

The Helicase ATP-binding domain occupies 26 to 414 (EGLDAGLAHQ…SAGEIADQVV (389 aa)). ATP is bound at residue 39–46 (GVTGSGKT). The short motif at 92 to 115 (YYDYYQPEAYVPTTDTFIEKDSSV) is the Beta-hairpin element. The 167-residue stretch at 432 to 598 (QVDDLLSEIR…ALKRNIKDIM (167 aa)) folds into the Helicase C-terminal domain. A UVR domain is found at 636-671 (EKEITKLEAQMYKHAQDLEFELAAQKRDEIEKLRQQ).

Belongs to the UvrB family. As to quaternary structure, forms a heterotetramer with UvrA during the search for lesions. Interacts with UvrC in an incision complex.

The protein resides in the cytoplasm. Functionally, the UvrABC repair system catalyzes the recognition and processing of DNA lesions. A damage recognition complex composed of 2 UvrA and 2 UvrB subunits scans DNA for abnormalities. Upon binding of the UvrA(2)B(2) complex to a putative damaged site, the DNA wraps around one UvrB monomer. DNA wrap is dependent on ATP binding by UvrB and probably causes local melting of the DNA helix, facilitating insertion of UvrB beta-hairpin between the DNA strands. Then UvrB probes one DNA strand for the presence of a lesion. If a lesion is found the UvrA subunits dissociate and the UvrB-DNA preincision complex is formed. This complex is subsequently bound by UvrC and the second UvrB is released. If no lesion is found, the DNA wraps around the other UvrB subunit that will check the other stand for damage. The sequence is that of UvrABC system protein B from Vibrio vulnificus (strain CMCP6).